The sequence spans 152 residues: Transcriptional regulator MraZ (152 aa).

2 consecutive SpoVT-AbrB domains span residues 5-52 (ASAI…PIHE) and 81-124 (AHEV…DEQS).

Belongs to the MraZ family. In terms of assembly, forms oligomers.

The protein localises to the cytoplasm. Its subcellular location is the nucleoid. In Shewanella baltica (strain OS155 / ATCC BAA-1091), this protein is Transcriptional regulator MraZ.